A 317-amino-acid polypeptide reads, in one-letter code: DNA-directed RNA polymerase subunit alpha 2 (317 aa).

The alpha N-terminal domain (alpha-NTD) stretch occupies residues 1–227; it reads MALENLLHPT…NQLRNIVDIE (227 aa). An alpha C-terminal domain (alpha-CTD) region spans residues 241 to 317; sequence INPILLKHVE…TLIENWPQDL (77 aa).

The protein belongs to the RNA polymerase alpha chain family. As to quaternary structure, homodimer. The RNAP catalytic core consists of 2 alpha, 1 beta, 1 beta' and 1 omega subunit. When a sigma factor is associated with the core the holoenzyme is formed, which can initiate transcription.

The enzyme catalyses RNA(n) + a ribonucleoside 5'-triphosphate = RNA(n+1) + diphosphate. In terms of biological role, DNA-dependent RNA polymerase catalyzes the transcription of DNA into RNA using the four ribonucleoside triphosphates as substrates. In Francisella tularensis subsp. holarctica (strain LVS), this protein is DNA-directed RNA polymerase subunit alpha 2.